Consider the following 365-residue polypeptide: c-di-GMP synthase (365 aa).

This sequence belongs to the CD-NTase family. E subfamily.

The catalysed reaction is 2 GTP = 3',3'-c-di-GMP + 2 diphosphate. Cyclic nucleotide synthase (second messenger synthase) of a CBASS antivirus system. CBASS (cyclic oligonucleotide-based antiphage signaling system) provides immunity against bacteriophage. The CD-NTase protein synthesizes cyclic nucleotides in response to infection; these serve as specific second messenger signals. The signals activate a diverse range of effectors, leading to bacterial cell death and thus abortive phage infection. A type I-D(GG) CBASS system. Its function is as follows. Cyclic dinucleotide synthase that catalyzes the synthesis of c-di-GMP, has no activity with other NTP substrates. The protein is c-di-GMP synthase of Flavobacteriaceae sp. genome_bin_11.